The sequence spans 382 residues: Serine/arginine-rich splicing factor SR45a (382 aa).

Low complexity-rich tracts occupy residues 30–45, 54–68, 177–195, and 202–219; these read PMSYSRRSRYSPSLSP, VSRSLSRSPTRSVSS, PSYSPRRSVSCSRSRSRSY, and SYSPSYGRRGRSSSYSPF. Disordered stretches follow at residues 30–76 and 150–382; these read PMSY…PGNS and KARR…SVSP. Over residues 288–316 the composition is skewed to basic and acidic residues; sequence RARDRSCSPYYRGRDRSYSPHYQGRDRSY. Positions 329–343 are enriched in low complexity; it reads VSGSVSPGGRSMSRS. Residues 345–361 are compositionally biased toward basic residues; it reads SPRKGRKESRSKSRRHD. Low complexity predominate over residues 364-382; sequence SSMCHSRSARSSTSRSVSP.

Belongs to the splicing factor SR family. SR45 subfamily. As to quaternary structure, component of the spliceosome. Homodimer. Interacts with PRP38, SCL28, SR45, RNU1 and U2AF35B. Post-translationally, phosphorylated. In terms of tissue distribution, expressed in leaves, stems and roots.

The protein localises to the nucleus speckle. In terms of biological role, probable splicing factor involved in constitutive and/or alternative splicing events. May bridge the 5' and 3' components of the spliceosome. The protein is Serine/arginine-rich splicing factor SR45a (SR45A) of Arabidopsis thaliana (Mouse-ear cress).